Reading from the N-terminus, the 238-residue chain is Endonuclease V (238 aa).

Mg(2+) contacts are provided by aspartate 46 and aspartate 116.

Belongs to the endonuclease V family. The cofactor is Mg(2+).

The protein localises to the cytoplasm. It carries out the reaction Endonucleolytic cleavage at apurinic or apyrimidinic sites to products with a 5'-phosphate.. DNA repair enzyme involved in the repair of deaminated bases. Selectively cleaves double-stranded DNA at the second phosphodiester bond 3' to a deoxyinosine leaving behind the intact lesion on the nicked DNA. The polypeptide is Endonuclease V (Bacillus subtilis (strain 168)).